Reading from the N-terminus, the 270-residue chain is Glutamate 5-kinase (270 aa).

Lys-15 is a binding site for ATP. Residues Ser-55, Asp-142, and Asn-158 each coordinate substrate. Residues 178 to 179 and 220 to 226 each bind ATP; these read SD and TGGMLSK.

The protein belongs to the glutamate 5-kinase family.

It is found in the cytoplasm. The catalysed reaction is L-glutamate + ATP = L-glutamyl 5-phosphate + ADP. It functions in the pathway amino-acid biosynthesis; L-proline biosynthesis; L-glutamate 5-semialdehyde from L-glutamate: step 1/2. Functionally, catalyzes the transfer of a phosphate group to glutamate to form L-glutamate 5-phosphate. This is Glutamate 5-kinase from Streptococcus uberis (strain ATCC BAA-854 / 0140J).